Here is a 183-residue protein sequence, read N- to C-terminus: Adenine phosphoribosyltransferase (183 aa).

Belongs to the purine/pyrimidine phosphoribosyltransferase family. Homodimer.

It is found in the cytoplasm. The enzyme catalyses AMP + diphosphate = 5-phospho-alpha-D-ribose 1-diphosphate + adenine. The protein operates within purine metabolism; AMP biosynthesis via salvage pathway; AMP from adenine: step 1/1. Functionally, catalyzes a salvage reaction resulting in the formation of AMP, that is energically less costly than de novo synthesis. This Klebsiella pneumoniae subsp. pneumoniae (strain ATCC 700721 / MGH 78578) protein is Adenine phosphoribosyltransferase.